The sequence spans 125 residues: uncharacterized protein (125 aa).

This sequence belongs to the asfivirus B125R family.

This is an uncharacterized protein from African swine fever virus (isolate Tick/Malawi/Lil 20-1/1983) (ASFV).